Consider the following 112-residue polypeptide: UPF0329 protein ECU11_0080 (112 aa).

Belongs to the UPF0329 family.

The chain is UPF0329 protein ECU11_0080 from Encephalitozoon cuniculi (strain GB-M1) (Microsporidian parasite).